The chain runs to 219 residues: Octanoyltransferase (219 aa).

Positions 32–207 (ADSGDEIWLL…HLVRQLGYAQ (176 aa)) constitute a BPL/LPL catalytic domain. Substrate contacts are provided by residues 71-78 (RGGQVTYH), 138-140 (SLG), and 151-153 (GLA). Cys169 serves as the catalytic Acyl-thioester intermediate.

This sequence belongs to the LipB family.

The protein resides in the cytoplasm. It catalyses the reaction octanoyl-[ACP] + L-lysyl-[protein] = N(6)-octanoyl-L-lysyl-[protein] + holo-[ACP] + H(+). Its pathway is protein modification; protein lipoylation via endogenous pathway; protein N(6)-(lipoyl)lysine from octanoyl-[acyl-carrier-protein]: step 1/2. Catalyzes the transfer of endogenously produced octanoic acid from octanoyl-acyl-carrier-protein onto the lipoyl domains of lipoate-dependent enzymes. Lipoyl-ACP can also act as a substrate although octanoyl-ACP is likely to be the physiological substrate. The sequence is that of Octanoyltransferase from Stutzerimonas stutzeri (strain A1501) (Pseudomonas stutzeri).